The primary structure comprises 1029 residues: Pro-apoptotic serine protease NMA111 (1029 aa).

The interval 1–49 (MNGPTSQRAKRKQGSASSLDDRPPKHQRALNGAKQQSTGDNTPEEDMYD) is disordered. The tract at residues 84–274 (VVSIRFCQTC…LPLDRPLRAL (191 aa)) is serine protease. Active-site charge relay system residues include histidine 122, aspartate 153, and serine 235. PDZ domains lie at 307–379 (PEWE…QRGG) and 845–958 (EFLG…VTFD). The segment at 997-1029 (KAMEGEPSEGVPAVEEEAGGAVDDDVPMAAVEK) is disordered. Acidic residues predominate over residues 1010–1022 (VEEEAGGAVDDDV).

Belongs to the peptidase S1C family.

The protein resides in the nucleus. In terms of biological role, nuclear serine protease which mediates apoptosis. The protein is Pro-apoptotic serine protease NMA111 (NMA111) of Pyricularia oryzae (strain 70-15 / ATCC MYA-4617 / FGSC 8958) (Rice blast fungus).